Reading from the N-terminus, the 361-residue chain is Zinc transporter ZIP13 (361 aa).

The Lumenal portion of the chain corresponds to Met-1–Cys-6. A helical membrane pass occupies residues Pro-7 to Leu-27. Residues Glu-28–Trp-68 are Cytoplasmic-facing. The chain crosses the membrane as a helical span at residues Ile-69–Ile-89. The Lumenal portion of the chain corresponds to Pro-90–Gln-108. The helical transmembrane segment at Leu-109–Ala-129 threads the bilayer. At Trp-130–Gln-150 the chain is on the cytoplasmic side. A helical membrane pass occupies residues Leu-151–Asn-171. Residues Ser-172–Ala-232 are Lumenal-facing. The helical transmembrane segment at Val-233 to Leu-253 threads the bilayer. The XEXPHE-motif signature appears at His-254–Glu-259. The Cytoplasmic segment spans residues His-254–Thr-275. The helical transmembrane segment at Ala-276–Cys-296 threads the bilayer. The Lumenal portion of the chain corresponds to Thr-297–Thr-306. A helical transmembrane segment spans residues Val-307–Leu-327. At Pro-328–Ser-339 the chain is on the cytoplasmic side. A helical transmembrane segment spans residues Leu-340–Val-360. Residue Glu-361 is a topological domain, lumenal.

It belongs to the ZIP transporter (TC 2.A.5) family. In terms of assembly, homodimer. As to expression, highly expressed in some tissues such as bone and eye. Expressed in osteoblasts of tibia and of alveolar bone, in proliferative zone of growth plate, and in odontoblasts on the forming of the dentine of crown in molar tooth. Also expressed fibroblasts in reticular layer of dermis of skin.

It is found in the golgi apparatus membrane. The protein resides in the cytoplasmic vesicle membrane. The protein localises to the endoplasmic reticulum membrane. It catalyses the reaction Zn(2+)(in) = Zn(2+)(out). In terms of biological role, functions as a zinc transporter transporting Zn(2+) from the Golgi apparatus to the cytosol and thus influences the zinc level at least in areas of the cytosol. May regulate beige adipocyte differentiation. The polypeptide is Zinc transporter ZIP13 (Mus musculus (Mouse)).